A 448-amino-acid chain; its full sequence is MEQIVSSLWSDCLNHLQTKVSPIDYSTWLRPLQASFANEELTLYAQNPFVENWVKDKFLTEIIDLARFLSKNEQLKITIRVGNKPTEQNLSASSTNKEELTQDTVHKFKTGLNGRLTFDNFVQGKSNQLAKAVAQQVADNPGESHCNPFSLYGGTGLGKTHLLHAVGNEILKRNPQARVVYIHSERFVQDMVKALKNNTIENFKKFYRSLDVLMIDDIQFFAKKEASQEEFFHTFNSLFERNKQIILASDHFPKNIENIEERIKSRLNWGVSTAIEPPELETRVAILMKKAEERNVELPEEVAFYLGQKLRTNVRELEGAINRVSAWCNFTKRQITIDAVRETLKDLIASYDHLVTIENIQKIVAEYYNIKMADLKSKSRTRSIARPRQMAMALAKELTSHSLPEIGREFGGRDHTTVMHACKTINELRDTDNSIQEDYTNLTRKLSS.

The interval Met-1–Ser-93 is domain I, interacts with DnaA modulators. Residues Ser-94–Thr-110 are domain II. The tract at residues Gly-111 to Cys-328 is domain III, AAA+ region. The ATP site is built by Gly-156, Gly-158, Lys-159, and Thr-160. Residues Asn-329–Ser-448 are domain IV, binds dsDNA.

The protein belongs to the DnaA family. Oligomerizes as a right-handed, spiral filament on DNA at oriC.

The protein resides in the cytoplasm. Plays an essential role in the initiation and regulation of chromosomal replication. ATP-DnaA binds to the origin of replication (oriC) to initiate formation of the DNA replication initiation complex once per cell cycle. Binds the DnaA box (a 9 base pair repeat at the origin) and separates the double-stranded (ds)DNA. Forms a right-handed helical filament on oriC DNA; dsDNA binds to the exterior of the filament while single-stranded (ss)DNA is stabiized in the filament's interior. The ATP-DnaA-oriC complex binds and stabilizes one strand of the AT-rich DNA unwinding element (DUE), permitting loading of DNA polymerase. After initiation quickly degrades to an ADP-DnaA complex that is not apt for DNA replication. Binds acidic phospholipids. This is Chromosomal replication initiator protein DnaA from Haemophilus ducreyi (strain 35000HP / ATCC 700724).